We begin with the raw amino-acid sequence, 125 residues long: Large ribosomal subunit protein eL31 (125 aa).

Belongs to the eukaryotic ribosomal protein eL31 family. In terms of assembly, component of the large ribosomal subunit.

The protein localises to the cytoplasm. Functionally, component of the large ribosomal subunit. The ribosome is a large ribonucleoprotein complex responsible for the synthesis of proteins in the cell. The polypeptide is Large ribosomal subunit protein eL31 (rpl31) (Ictalurus punctatus (Channel catfish)).